The following is a 206-amino-acid chain: Small ribosomal subunit protein uS4 (206 aa).

In terms of domain architecture, S4 RNA-binding spans 96–158; the sequence is SRLDNVVYRM…AKGQLRIKGA (63 aa).

Belongs to the universal ribosomal protein uS4 family. As to quaternary structure, part of the 30S ribosomal subunit. Contacts protein S5. The interaction surface between S4 and S5 is involved in control of translational fidelity.

Functionally, one of the primary rRNA binding proteins, it binds directly to 16S rRNA where it nucleates assembly of the body of the 30S subunit. Its function is as follows. With S5 and S12 plays an important role in translational accuracy. The protein is Small ribosomal subunit protein uS4 of Coxiella burnetii (strain CbuG_Q212) (Coxiella burnetii (strain Q212)).